The primary structure comprises 169 residues: Transmembrane protein B169L (169 aa).

The next 2 membrane-spanning stretches (helical) occupy residues 28-48 (NPFI…FAIC) and 60-80 (TAIY…YVLN). Asparagine 88 carries an N-linked (GlcNAc...) asparagine; by host glycan. A disordered region spans residues 107 to 169 (DEIIPPISPP…EVIMPSQYNN (63 aa)). Positions 140–154 (KPADSKPASSADSKP) are enriched in low complexity.

The protein belongs to the asfivirus B169L family.

It is found in the host membrane. The protein localises to the virion. In Ornithodoros (relapsing fever ticks), this protein is Transmembrane protein B169L.